The chain runs to 553 residues: MTKFVFVTGGVVSSLGKGIAAASLAAILESRGLKVTLLKLDPYINVDPGTMSPFQHGEVFVTEDGAETDLDLGHYERFVSAKMRKANNFTTGQIYESVIRKERRGEYLGKTVQVIPHITNEIQAFIERGAAASHDGKADVAIVEIGGTVGDIESLPFLEAARQMSLRLGRNQVAFAHLTLVPFIASAGELKTKPTQHSVQKLREIGVQPTALLCRADRPIPDDERAKISLFANMPQDAVISVWDVDTIYKIPQMLNEQGLDRIICEELRIEAPPADLSVWAHMVHTLENPQHEITIGMVGKYVDLTESYKSLIEALRHAGLHTSTRVNIEYIDSEELESGHTQVLDTLDAILVPGGFGKRGTEGKIRAIQYAREKGVPYLGICLGMQLAVIEFARHLAGMKDANSTEFNDETEHPVVALITEWLDRDGRVEKRSADSDLGGTMRLGSQRVPVQSGTKAAAIYGAEVNERHRHRYEVNNHYVPQLEKAGMIISARTPSENLPEMMELPASMHPWFVGVQFHPEFTSTPRDGHPLFKAYVEAALAHQQNTQRAAA.

The tract at residues 1 to 270 (MTKFVFVTGG…DRIICEELRI (270 aa)) is amidoligase domain. A CTP-binding site is contributed by Ser-13. Ser-13 is a UTP binding site. Residues 14–19 (SLGKGI) and Asp-71 contribute to the ATP site. Asp-71 and Glu-144 together coordinate Mg(2+). CTP is bound by residues 151–153 (DIE), 191–196 (KTKPTQ), and Lys-227. UTP is bound by residues 191–196 (KTKPTQ) and Lys-227. A Glutamine amidotransferase type-1 domain is found at 295 to 547 (TIGMVGKYVD…VEAALAHQQN (253 aa)). Gly-356 contributes to the L-glutamine binding site. The Nucleophile; for glutamine hydrolysis role is filled by Cys-383. L-glutamine contacts are provided by residues 384–387 (LGMQ), Glu-407, and Arg-473. Residues His-520 and Glu-522 contribute to the active site.

It belongs to the CTP synthase family. As to quaternary structure, homotetramer.

The catalysed reaction is UTP + L-glutamine + ATP + H2O = CTP + L-glutamate + ADP + phosphate + 2 H(+). It carries out the reaction L-glutamine + H2O = L-glutamate + NH4(+). It catalyses the reaction UTP + NH4(+) + ATP = CTP + ADP + phosphate + 2 H(+). It participates in pyrimidine metabolism; CTP biosynthesis via de novo pathway; CTP from UDP: step 2/2. Allosterically activated by GTP, when glutamine is the substrate; GTP has no effect on the reaction when ammonia is the substrate. The allosteric effector GTP functions by stabilizing the protein conformation that binds the tetrahedral intermediate(s) formed during glutamine hydrolysis. Inhibited by the product CTP, via allosteric rather than competitive inhibition. In terms of biological role, catalyzes the ATP-dependent amination of UTP to CTP with either L-glutamine or ammonia as the source of nitrogen. Regulates intracellular CTP levels through interactions with the four ribonucleotide triphosphates. The sequence is that of CTP synthase from Ralstonia pickettii (strain 12J).